The chain runs to 49 residues: Large ribosomal subunit protein bL33B (49 aa).

It belongs to the bacterial ribosomal protein bL33 family.

This is Large ribosomal subunit protein bL33B from Limosilactobacillus fermentum (strain NBRC 3956 / LMG 18251) (Lactobacillus fermentum).